The chain runs to 193 residues: Penicillin-binding protein activator LpoB (193 aa).

The N-terminal stretch at 1–16 is a signal peptide; it reads MKRYLSVALAALVLTG. C17 carries the N-palmitoyl cysteine lipid modification. The S-diacylglycerol cysteine moiety is linked to residue C17. Residues 24 to 55 are disordered; that stretch reads EPTTPPVTIEPVTPPVPETPPPVDNVPPPPKM. Residues 35–54 show a composition bias toward pro residues; it reads VTPPVPETPPPVDNVPPPPK.

Belongs to the LpoB family. Interacts with PBP1b.

Its subcellular location is the cell outer membrane. Regulator of peptidoglycan synthesis that is essential for the function of penicillin-binding protein 1B (PBP1b). In Yersinia enterocolitica serotype O:8 / biotype 1B (strain NCTC 13174 / 8081), this protein is Penicillin-binding protein activator LpoB.